Consider the following 447-residue polypeptide: N-succinylarginine dihydrolase (447 aa).

Substrate-binding positions include 19 to 28, asparagine 110, and 137 to 138; these read AGLSFGNEAS and HR. Glutamate 174 is a catalytic residue. Arginine 212 is a binding site for substrate. The active site involves histidine 248. Positions 250 and 359 each coordinate substrate. Cysteine 365 (nucleophile) is an active-site residue.

The protein belongs to the succinylarginine dihydrolase family. In terms of assembly, homodimer.

It carries out the reaction N(2)-succinyl-L-arginine + 2 H2O + 2 H(+) = N(2)-succinyl-L-ornithine + 2 NH4(+) + CO2. It participates in amino-acid degradation; L-arginine degradation via AST pathway; L-glutamate and succinate from L-arginine: step 2/5. Its function is as follows. Catalyzes the hydrolysis of N(2)-succinylarginine into N(2)-succinylornithine, ammonia and CO(2). The protein is N-succinylarginine dihydrolase of Escherichia coli O139:H28 (strain E24377A / ETEC).